A 311-amino-acid chain; its full sequence is 4-diphosphocytidyl-2-C-methyl-D-erythritol kinase (311 aa).

Lys-10 is a catalytic residue. 105 to 115 is a binding site for ATP; sequence PVAGGMAGGSA. Asp-146 is an active-site residue.

The protein belongs to the GHMP kinase family. IspE subfamily.

It catalyses the reaction 4-CDP-2-C-methyl-D-erythritol + ATP = 4-CDP-2-C-methyl-D-erythritol 2-phosphate + ADP + H(+). It participates in isoprenoid biosynthesis; isopentenyl diphosphate biosynthesis via DXP pathway; isopentenyl diphosphate from 1-deoxy-D-xylulose 5-phosphate: step 3/6. Its function is as follows. Catalyzes the phosphorylation of the position 2 hydroxy group of 4-diphosphocytidyl-2C-methyl-D-erythritol. The polypeptide is 4-diphosphocytidyl-2-C-methyl-D-erythritol kinase (Corynebacterium glutamicum (strain ATCC 13032 / DSM 20300 / JCM 1318 / BCRC 11384 / CCUG 27702 / LMG 3730 / NBRC 12168 / NCIMB 10025 / NRRL B-2784 / 534)).